The following is a 29-amino-acid chain: Ranatuerin-2SEa (29 aa).

Cys23 and Cys29 are disulfide-bonded.

Expressed by the skin glands.

It localises to the secreted. In terms of biological role, mast cell degranulating peptide. Causes histamine release from rat peritoneal mast cells in vitro. Has antibacterial activity against the Gram-negative bacterium E.coli K12 and Gram-positive bacterium M.luteus NCT C2665. The protein is Ranatuerin-2SEa of Lithobates sevosus (Dusky gopher frog).